The primary structure comprises 107 residues: UPF0060 membrane protein glr4174 (107 aa).

Helical transmembrane passes span 1 to 21 (MALL…FAFW), 26 to 46 (LGKN…FAWL), 58 to 78 (AYAA…WLVE), and 87 to 107 (LAGA…DRSP).

The protein belongs to the UPF0060 family.

It localises to the cell inner membrane. The polypeptide is UPF0060 membrane protein glr4174 (Gloeobacter violaceus (strain ATCC 29082 / PCC 7421)).